Reading from the N-terminus, the 661-residue chain is Sodium/potassium/calcium exchanger 2 (661 aa).

Topologically, residues 1-38 (MDLQQSTTITSLEKWCLDESLSGCRRHYSVKKKLKLIR) are cytoplasmic. A helical membrane pass occupies residues 39 to 59 (VLGLFMGLVAISTVSFSISAF). Topologically, residues 60 to 132 (SETDTQSTGE…DIFSLEERRK (73 aa)) are extracellular. A disordered region spans residues 99 to 120 (PQPPLSKEGESENSTDHAQGDY). Positions 105-120 (KEGESENSTDHAQGDY) are enriched in basic and acidic residues. N-linked (GlcNAc...) asparagine glycosylation occurs at asparagine 111. The chain crosses the membrane as a helical span at residues 133–153 (GAIILHVIGMIYMFIALAIVC). At 154-178 (DEFFVPSLTVITEKLGISDDVAGAT) the chain is on the cytoplasmic side. The Alpha-1 repeat unit spans residues 174 to 214 (VAGATFMAAGGSAPELFTSLIGVFIAHSNVGIGTIVGSAVF). The chain crosses the membrane as a helical span at residues 179-199 (FMAAGGSAPELFTSLIGVFIA). Residues 200–204 (HSNVG) lie on the Extracellular side of the membrane. A helical transmembrane segment spans residues 205–225 (IGTIVGSAVFNILFVIGMCAL). The Cytoplasmic portion of the chain corresponds to 226-243 (FSREILNLTWWPLFRDVS). Residues 244-264 (FYIVDLIMLIIFFLDNVIMWW) form a helical membrane-spanning segment. Glutamate 265 is a topological domain (extracellular). Residues 266-286 (SLLLLTAYFCYVVFMKFNVQV) form a helical membrane-spanning segment. Topologically, residues 287 to 497 (EKWVKQMINR…PDVRKPSSRK (211 aa)) are cytoplasmic. The disordered stretch occupies residues 306 to 336 (EAQAKPSAARDKDEPTLPAKPRLQRGGSSAS). Serine 336 and serine 340 each carry phosphoserine. Residues 397 to 439 (DENERQNGAANHVEKIELPNSTSTDVEMTPSSDASEPVQNGNL) are disordered. The segment covering 415–439 (PNSTSTDVEMTPSSDASEPVQNGNL) has biased composition (polar residues). Residues 498–518 (FFPITFFGSITWIAVFSYLMV) traverse the membrane as a helical segment. At 519–533 (WWAHQVGETIGISEE) the chain is on the extracellular side. The helical transmembrane segment at 534–554 (IMGLTILAAGTSIPDLITSVI) threads the bilayer. One copy of the Alpha-2 repeat lies at 541-572 (AAGTSIPDLITSVIVARKGLGDMAVSSSVGSN). Residues 555–569 (VARKGLGDMAVSSSV) are Cytoplasmic-facing. Residues 570-590 (GSNIFDITVGLPLPWLLYTVI) traverse the membrane as a helical segment. At 591 to 602 (HRFQPVAVSSNG) the chain is on the extracellular side. The helical transmembrane segment at 603–623 (LFCAIVLLFIMLLFVILSIAL) threads the bilayer. At 624-630 (CKWRMNK) the chain is on the cytoplasmic side. The chain crosses the membrane as a helical span at residues 631–651 (ILGFIMFGLYFVFLVVSVLLE). The Extracellular segment spans residues 652-661 (DRILTCPVSI).

This sequence belongs to the Ca(2+):cation antiporter (CaCA) (TC 2.A.19) family. SLC24A subfamily.

The protein localises to the cell membrane. The enzyme catalyses Ca(2+)(out) + K(+)(out) + 4 Na(+)(in) = Ca(2+)(in) + K(+)(in) + 4 Na(+)(out). In terms of biological role, calcium, potassium:sodium antiporter that transports 1 Ca(2+) and 1 K(+) in exchange for 4 Na(+). Required for learming and memory by regulating neuronal Ca(2+), which is essential for the development of synaptic plasticity. This chain is Sodium/potassium/calcium exchanger 2 (SLC24A2), found in Homo sapiens (Human).